The primary structure comprises 58 residues: uncharacterized protein (58 aa).

This is an uncharacterized protein from Dictyostelium discoideum (Social amoeba).